Consider the following 116-residue polypeptide: Tachykinin-3 (116 aa).

A signal peptide spans 1-20 (MRSAMLFAAVLALSLAWTFG). Positions 21-79 (AVCEEPQGQGGRLSKDSDLYQLPPSLLRRLYDSRPVSLEGLLKVLSKASVGPKETSLPQ) are excised as a propeptide. M91 is modified (methionine amide). A disordered region spans residues 93–116 (KRNSQPDTPTDVVEENTPSFGILK). A propeptide spanning residues 95 to 116 (NSQPDTPTDVVEENTPSFGILK) is cleaved from the precursor.

The protein belongs to the tachykinin family.

The protein localises to the secreted. Tachykinins are active peptides which excite neurons, evoke behavioral responses, are potent vasodilators and secretagogues, and contract (directly or indirectly) many smooth muscles. Is a critical central regulator of gonadal function. The sequence is that of Tachykinin-3 (Tac3) from Mus musculus (Mouse).